The chain runs to 445 residues: Probable histidine--tRNA ligase, cytoplasmic (445 aa).

It belongs to the class-II aminoacyl-tRNA synthetase family.

The protein resides in the cytoplasm. It carries out the reaction tRNA(His) + L-histidine + ATP = L-histidyl-tRNA(His) + AMP + diphosphate + H(+). In Antonospora locustae (Microsporidian parasite), this protein is Probable histidine--tRNA ligase, cytoplasmic.